The chain runs to 152 residues: Heavy metal-associated isoprenylated plant protein 20 (152 aa).

Positions 27-90 (MQTVNIKVKM…RIERTGKKAE (64 aa)) constitute an HMA domain. Residues cysteine 38 and cysteine 41 each contribute to the Cd(2+) site. Cysteine 149 carries the post-translational modification Cysteine methyl ester. The S-farnesyl cysteine moiety is linked to residue cysteine 149. Residues 150–152 (TVM) constitute a propeptide, removed in mature form.

This sequence belongs to the HIPP family. As to quaternary structure, interacts with ZHD11/HB29. As to expression, expressed in roots, shoot apical meristem, leaves and flowers.

It localises to the membrane. Its function is as follows. Heavy-metal-binding protein. Binds cadmium. May be involved in cadmium transport and play a role in cadmium detoxification. The chain is Heavy metal-associated isoprenylated plant protein 20 from Arabidopsis thaliana (Mouse-ear cress).